Reading from the N-terminus, the 192-residue chain is Interferon (192 aa).

Positions 1–30 (MAVPASPQHPRGYGILLLTLLMKALAAAAA) are cleaved as a signal peptide. Intrachain disulfides connect Cys-31-Cys-128, Cys-60-Cys-154, and Cys-67-Cys-167. 2 N-linked (GlcNAc...) asparagine glycosylation sites follow: Asn-70 and Asn-77.

It belongs to the alpha/beta interferon family.

The protein resides in the secreted. Its function is as follows. Has antiviral activities. The sequence is that of Interferon from Meleagris gallopavo (Wild turkey).